The chain runs to 173 residues: Putative phosphoesterase GTNG_0743 (173 aa).

H34 acts as the Proton donor in catalysis. 2 short sequence motifs (HXTX) span residues 34 to 37 (HITL) and 115 to 118 (HITI). H115 serves as the catalytic Proton acceptor.

The protein belongs to the 2H phosphoesterase superfamily. YjcG family.

The protein is Putative phosphoesterase GTNG_0743 of Geobacillus thermodenitrificans (strain NG80-2).